Reading from the N-terminus, the 195-residue chain is FMN-dependent NADH:quinone oxidoreductase (195 aa).

FMN-binding positions include Ser10, 16–18, and 88–91; these read SVS and MYNF.

This sequence belongs to the azoreductase type 1 family. Homodimer. It depends on FMN as a cofactor.

The enzyme catalyses 2 a quinone + NADH + H(+) = 2 a 1,4-benzosemiquinone + NAD(+). The catalysed reaction is N,N-dimethyl-1,4-phenylenediamine + anthranilate + 2 NAD(+) = 2-(4-dimethylaminophenyl)diazenylbenzoate + 2 NADH + 2 H(+). Quinone reductase that provides resistance to thiol-specific stress caused by electrophilic quinones. In terms of biological role, also exhibits azoreductase activity. Catalyzes the reductive cleavage of the azo bond in aromatic azo compounds to the corresponding amines. In Francisella philomiragia subsp. philomiragia (strain ATCC 25017 / CCUG 19701 / FSC 153 / O#319-036), this protein is FMN-dependent NADH:quinone oxidoreductase.